The following is a 1300-amino-acid chain: CRISPR-associated endonuclease Cas12a (1300 aa).

Residues 1–24 form a wedge region 1 region; the sequence is MSIYQEFVNKYSLSKTLRFELIPQ. Recognition domain regions lie at residues 25–339 and 340–591; these read GKTL…SFVI and DKLE…QKPY. Binds crRNA alone and in crRNA-target DNA heteroduplex stretches follow at residues 47–51 and 182–186; these read YKKAK and FHENR. Residues 301 to 305 are binds DNA in crRNA-target DNA heteroduplex; that stretch reads NEYIN. Binds crRNA in crRNA-target DNA heteroduplex regions lie at residues 326 to 329 and 538 to 541; these read KQIL and HKLK. Residues 591-595 are binds crRNA; the sequence is YSDEK. Residues 592-662 are wedge region 2; that stretch reads SDEKFKLNFE…GYKKIVYKLL (71 aa). The interval 662-679 is LKL, important for PAM recognition and DNA unwinding; sequence LPGANKMLPKVFFSAKSI. The PAM-interacting domain (PI) stretch occupies residues 663-762; the sequence is PGANKMLPKV…FYREVENQGY (100 aa). Residues 671–677 are binds DNA protospacer adjacent motif (PAM) on target DNA; sequence KVFFSAK. Positions 692-704 are binds single-strand non-target DNA; sequence RNHSTHTKNGSPQ. Residues 763–892 form a wedge region 3 region; it reads KLTFENISES…PITINFKSSG (130 aa). Binds crRNA stretches follow at residues 791-794 and 803-804; these read KDFS and LH. Catalysis depends on for pre-crRNA processing residues His-843, Lys-852, and Lys-869. Binds crRNA stretches follow at residues 851 to 853 and 865 to 873; these read NKN and YDLIKDKRF. The tract at residues 893-953 is ruvC-I; the sequence is ANKFNDEINL…IGNDRMKTNY (61 aa). The For DNase activity of RuvC domain role is filled by Asp-917. The interval 954–971 is bridge helix; that stretch reads HDKLAAIEKDRDSARKDW. The tract at residues 972–1078 is ruvC-II; it reads KKINNIKEMK…KQTGIIYYVP (107 aa). The active-site For DNase activity of RuvC domain is Glu-1006. Residues 1079 to 1254 form a nuclease domain region; it reads AGFTSKICPV…QAPKNMPQDA (176 aa). Asp-1255 functions as the For DNase activity of RuvC domain in the catalytic mechanism. Residues 1255–1300 are ruvC-III; the sequence is DANGAYHIGLKGLMLLGRIKNNQEGKKLNLVIKNEEYFEFVQNRNN.

This sequence belongs to the CRISPR-associated endonuclease Cas12a family. As to quaternary structure, might be a homodimer. Might be a monomer. It depends on Ca(2+) as a cofactor. Mg(2+) serves as cofactor.

The catalysed reaction is Endonucleolytic cleavage to 5'-phosphodinucleotide and 5'-phosphooligonucleotide end-products.. It catalyses the reaction RNA = a 5'-hydroxy-ribonucleotide + n nucleoside-2',3'-cyclophosphates.. CRISPR (clustered regularly interspaced short palindromic repeat), is an adaptive immune system that provides protection against mobile genetic elements (viruses, transposable elements and conjugative plasmids). CRISPR clusters contain sequences complementary to antecedent mobile elements and target invading nucleic acids. CRISPR clusters are transcribed and processed into CRISPR RNA (crRNA). Has endonuclease activity on pre-crRNA and dsDNA, using different active sites. A single-RNA guided endonuclease that is also capable of guiding crRNA processing; correct processing of pre-crRNA requires only this protein and the CRISPR locus. pre-crRNA processing proceeds by an intramolecular nucleophilic attack on the scissile phosphate by the 2'-OH of the upstream ribonucleotide, the divalent cation (which is bound by the crRNA) is probably required for ordering the crRNA pseudoknot and/or increasing RNA binding. RNA mutagenesis studies show pre-crRNA cleavage is highly sequence- and structure-specific. Forms a complex with crRNA and complementary dsDNA, where the crRNA displaces the non-target DNA strand and directs endonucleolytic cleavage of both strands of the DNA. Cleavage results in staggered 5-base 5' overhangs 14-18 and 21-23 bases downstream of the PAM (protospacer adjacent motif) on the non-target and target strands respectively. Both target and non-target strand DNA are probably independently cleaved in the same active site. When this protein is expressed in E.coli it prevents plasmids homologous to the first CRISPR spacer from transforming, formally showing it is responsible for plasmid immunity. This is CRISPR-associated endonuclease Cas12a from Francisella tularensis subsp. novicida (strain U112).